Reading from the N-terminus, the 316-residue chain is tRNA dimethylallyltransferase (316 aa).

Gly17–Thr24 lines the ATP pocket. Residue Thr19 to Thr24 coordinates substrate. 4 interaction with substrate tRNA regions span residues Asp42–Leu45, Gln166–Arg170, Arg247–Arg252, and Lys280–Arg287.

The protein belongs to the IPP transferase family. As to quaternary structure, monomer. Mg(2+) is required as a cofactor.

The enzyme catalyses adenosine(37) in tRNA + dimethylallyl diphosphate = N(6)-dimethylallyladenosine(37) in tRNA + diphosphate. Catalyzes the transfer of a dimethylallyl group onto the adenine at position 37 in tRNAs that read codons beginning with uridine, leading to the formation of N6-(dimethylallyl)adenosine (i(6)A). This chain is tRNA dimethylallyltransferase, found in Escherichia coli O81 (strain ED1a).